A 147-amino-acid chain; its full sequence is Large ribosomal subunit protein uL13 (147 aa).

This sequence belongs to the universal ribosomal protein uL13 family. In terms of assembly, part of the 50S ribosomal subunit.

In terms of biological role, this protein is one of the early assembly proteins of the 50S ribosomal subunit, although it is not seen to bind rRNA by itself. It is important during the early stages of 50S assembly. This chain is Large ribosomal subunit protein uL13, found in Mycobacteroides abscessus (strain ATCC 19977 / DSM 44196 / CCUG 20993 / CIP 104536 / JCM 13569 / NCTC 13031 / TMC 1543 / L948) (Mycobacterium abscessus).